The chain runs to 264 residues: Transcription factor bHLH52 (264 aa).

Positions 134–183 (RELSAQSIAARKRRRRITEKTQELGKLIPGSQKHNTAEMFNAAAKYVKFL) constitute a bHLH domain.

In terms of assembly, homodimer. In terms of tissue distribution, expressed constitutively in roots, leaves, stems, and flowers.

It is found in the nucleus. This chain is Transcription factor bHLH52 (BHLH52), found in Arabidopsis thaliana (Mouse-ear cress).